We begin with the raw amino-acid sequence, 329 residues long: 7,8-didemethyl-8-hydroxy-5-deazariboflavin synthase (329 aa).

The Radical SAM core domain maps to 1 to 235; the sequence is MFIPVTNICR…SDVSVQVAPN (235 aa). The [4Fe-4S] cluster site is built by C9, C13, and C16.

Belongs to the radical SAM superfamily. CofG family. As to quaternary structure, consists of two subunits, CofG and CofH. Requires [4Fe-4S] cluster as cofactor.

It catalyses the reaction 5-amino-5-(4-hydroxybenzyl)-6-(D-ribitylimino)-5,6-dihydrouracil + S-adenosyl-L-methionine = 7,8-didemethyl-8-hydroxy-5-deazariboflavin + 5'-deoxyadenosine + L-methionine + NH4(+) + H(+). The protein operates within cofactor biosynthesis; coenzyme F0 biosynthesis. Its function is as follows. Catalyzes the radical-mediated synthesis of 7,8-didemethyl-8-hydroxy-5-deazariboflavin from 5-amino-5-(4-hydroxybenzyl)-6-(D-ribitylimino)-5,6-dihydrouracil. The sequence is that of 7,8-didemethyl-8-hydroxy-5-deazariboflavin synthase from Methanosarcina acetivorans (strain ATCC 35395 / DSM 2834 / JCM 12185 / C2A).